A 721-amino-acid polypeptide reads, in one-letter code: Centlein (721 aa).

Residues 52–164 (KNEKAISEQT…LRDENEEVVN (113 aa)) adopt a coiled-coil conformation. 2 disordered regions span residues 156-180 (RDENEEVVNPEEKEHCPTDKAKSEM) and 259-288 (ETSQNIRPIENDGNQKETDQTEDSRAQQEV). Composition is skewed to basic and acidic residues over residues 165–178 (PEEKEHCPTDKAKS) and 267–284 (IENDGNQKETDQTEDSRA). Coiled coils occupy residues 345–515 (LLRE…EDLK) and 573–626 (QSEQ…TQKS). T658 carries the phosphothreonine modification.

As to quaternary structure, interacts with CEP250 and CEP68. Interacts with NEK2; the interaction leads to phosphorylation of CNTLN. Post-translationally, phosphorylated directly or indirectly by NEK2.

The protein resides in the cytoplasm. Its subcellular location is the cytoskeleton. It localises to the microtubule organizing center. The protein localises to the centrosome. It is found in the centriole. Required for centrosome cohesion and recruitment of CEP68 to centrosomes. This is Centlein from Rattus norvegicus (Rat).